Reading from the N-terminus, the 905-residue chain is Toll-like receptor 3 (905 aa).

Residues 1-25 (MKGCSSYLMYSFGGLLSLWILLVSS) form the signal peptide. One can recognise an LRRNT domain in the interval 26–52 (TNQCTVRYNVADCSHLKLTHIPDDLPS). At 26 to 705 (TNQCTVRYNV…SCKDSAPFEL (680 aa)) the chain is on the lumenal side. C29 and C38 are disulfide-bonded. N-linked (GlcNAc...) asparagine glycosylation is found at N53, N58, and N71. LRR repeat units lie at residues 53 to 74 (NITV…NFTR), 77 to 98 (QLAI…LCQI), 101 to 122 (LLKV…TFVF), 125 to 146 (NLTE…PFKN), 149 to 170 (NLIK…TGVQ), and 173 to 196 (NLQE…EFLG). C96 and C123 are oxidised to a cystine. N125 carries an N-linked (GlcNAc...) asparagine glycan. The N-linked (GlcNAc...) asparagine glycan is linked to N197. The stretch at 199-220 (SLRKLDLSSNPLKEFSPGCFQT) is one LRR 7 repeat. N-linked (GlcNAc...) asparagine glycosylation is found at N248, N253, N276, and N292. LRR repeat units follow at residues 250–271 (SIQN…TFSG), 276–297 (NLTQ…SFSY), 300–321 (SLRY…SFYG), 324–345 (NLRY…ASHP), 357–378 (YLEY…TFTG), 381–401 (SLKY…TNET), 409–430 (PLLT…TFSW), 433–454 (QLRI…QEWR), 458–479 (NIFE…SFAL), 482–502 (SLQR…SPSP), 508–529 (NLTI…LLEG), 532–553 (NLEI…ANPG), 564–585 (HLHI…VFKN), 588–609 (ELKS…IFDD), and 612–633 (SLRS…VFGP). N-linked (GlcNAc...) asparagine glycans are attached at residues N399, N414, and N425. Residue N508 is glycosylated (N-linked (GlcNAc...) asparagine). In terms of domain architecture, LRRCT spans 646-699 (NPFDCTCESISWFVNWINQTHTNISELSTHYLCNTPHHYYGFPLKLFDTSSCKD). 2 cysteine pairs are disulfide-bonded: C650-C678 and C652-C697. Residues N663 and N668 are each glycosylated (N-linked (GlcNAc...) asparagine). Residues 706-726 (LFIISTSMLLVFILVVLLIHI) form a helical membrane-spanning segment. At 727-905 (EGWRISFYWN…VALGSRNSAH (179 aa)) the chain is on the cytoplasmic side. Residues 755 to 898 (FEYTAYIIHA…AFHHKLQVAL (144 aa)) form the TIR domain. Position 760 is a phosphotyrosine (Y760). Glycyl lysine isopeptide (Lys-Gly) (interchain with G-Cter in ubiquitin) cross-links involve residues K766, K813, and K832. Phosphotyrosine is present on Y859.

Belongs to the Toll-like receptor family. Monomer and homodimer; dimerization is triggered by ligand-binding, the signaling unit is composed of one ds-RNA of around 40 bp and two TLR3 molecules, and lateral clustering of signaling units along the length of the ds-RNA ligand is required for TLR3 signal transduction. Interacts (via transmembrane domain) with UNC93B1; the interaction is required for transport from the ER to the endosomes. Interacts with SRC; upon binding of double-stranded RNA. Interacts with TICAM1 (via the TIR domain) in response to poly(I:C) and this interaction is enhanced in the presence of WDFY1. The tyrosine-phosphorylated form (via TIR domain) interacts with WDFY1 (via WD repeat 2) in response to poly(I:C). Ubiquitinated by RNF170 at Lys-766 via 'Lys-48'-linked ubiquitin chains; leading to TLR3 proteasomal degradation. In terms of processing, TLR3 signaling requires a proteolytic cleavage mediated by cathepsins CTSB and CTSH, the cleavage occurs between amino acids 252 and 346. The cleaved form of TLR3 is the predominant form found in endosomes. Ubiquitinated by TRIM3; leading to recognition and sorting of polyubiquitinated TLR3 by the ESCRT complexes. Ubiquitinated by ZNRF1 via 'Lys-63'-linked ubiquitin chains; leading to TLR3 lysosomal trafficking and degradation. In terms of tissue distribution, highly expressed in lung. After intraperitoneal injection of lipopolysaccharide, highly expressed in brain, heart, kidney, liver, lung and spleen.

The protein resides in the endoplasmic reticulum membrane. The protein localises to the endosome membrane. Its subcellular location is the early endosome. Key component of innate and adaptive immunity. TLRs (Toll-like receptors) control host immune response against pathogens through recognition of molecular patterns specific to microorganisms. TLR3 is a nucleotide-sensing TLR which is activated by double-stranded RNA, a sign of viral infection. Acts via the adapter TRIF/TICAM1, leading to NF-kappa-B activation, IRF3 nuclear translocation, cytokine secretion and the inflammatory response. This Mus musculus (Mouse) protein is Toll-like receptor 3.